The following is a 342-amino-acid chain: uncharacterized protein (342 aa).

This sequence belongs to the cycloisomerase 2 family.

This is an uncharacterized protein from Staphylococcus epidermidis (strain ATCC 12228 / FDA PCI 1200).